Consider the following 315-residue polypeptide: Archaeosortase A (315 aa).

7 helical membrane-spanning segments follow: residues 12–32 (VIPYTDVLAWVVMAAFIAGVA), 47–67 (AGAWWLFAVFWFVLIQHFAFV), 74–94 (TVLILIAVPACLYVGWLVFAG), 173–193 (VVFECTGIGAMSIFGGLIAAV), 204–224 (IALSISIIWVLNIGRNVFIAL), 227–247 (GYQWFAYSWLEGPIMALFGLT), and 260–280 (VLAQLLAVVALAGLAWFIARW). The active-site Acyl-thioester intermediate is the C177. Catalysis depends on R218, which acts as the Proton donor.

Belongs to the exosortase/archaeosortase family. Archaeosortase A subfamily.

It localises to the cell membrane. Functionally, transpeptidase that recognizes and modifies its substrate by proteolytic cleavage of a sorting signal. Following cleavage, a covalent intermediate is formed via a thioester bond between the archaeosortase and its substrate, which is then transferred and covalently attached to the cell membrane. The protein is Archaeosortase A of Natronomonas pharaonis (strain ATCC 35678 / DSM 2160 / CIP 103997 / JCM 8858 / NBRC 14720 / NCIMB 2260 / Gabara) (Halobacterium pharaonis).